The primary structure comprises 337 residues: Inositol 2-dehydrogenase (337 aa).

This sequence belongs to the Gfo/Idh/MocA family. As to quaternary structure, homotetramer.

It catalyses the reaction myo-inositol + NAD(+) = scyllo-inosose + NADH + H(+). Its function is as follows. Involved in the oxidation of myo-inositol (MI) to 2-keto-myo-inositol (2KMI or 2-inosose). This Arthrobacter sp. (strain FB24) protein is Inositol 2-dehydrogenase.